Reading from the N-terminus, the 206-residue chain is Ribosomal RNA large subunit methyltransferase E (206 aa).

5 residues coordinate S-adenosyl-L-methionine: G60, W62, D80, D96, and D121. Catalysis depends on K161, which acts as the Proton acceptor.

This sequence belongs to the class I-like SAM-binding methyltransferase superfamily. RNA methyltransferase RlmE family.

It is found in the cytoplasm. The enzyme catalyses uridine(2552) in 23S rRNA + S-adenosyl-L-methionine = 2'-O-methyluridine(2552) in 23S rRNA + S-adenosyl-L-homocysteine + H(+). In terms of biological role, specifically methylates the uridine in position 2552 of 23S rRNA at the 2'-O position of the ribose in the fully assembled 50S ribosomal subunit. This Stutzerimonas stutzeri (strain A1501) (Pseudomonas stutzeri) protein is Ribosomal RNA large subunit methyltransferase E.